A 202-amino-acid chain; its full sequence is Type II restriction enzyme MunI (202 aa).

In terms of assembly, homodimer.

It carries out the reaction Endonucleolytic cleavage of DNA to give specific double-stranded fragments with terminal 5'-phosphates.. A P subtype restriction enzyme that recognizes the double-stranded sequence 5'-CAATTG-3' and cleaves after C-1. This is Type II restriction enzyme MunI from Mycoplasma sp.